Here is a 431-residue protein sequence, read N- to C-terminus: Gamma-glutamyl phosphate reductase (431 aa).

It belongs to the gamma-glutamyl phosphate reductase family.

It is found in the cytoplasm. The catalysed reaction is L-glutamate 5-semialdehyde + phosphate + NADP(+) = L-glutamyl 5-phosphate + NADPH + H(+). It participates in amino-acid biosynthesis; L-proline biosynthesis; L-glutamate 5-semialdehyde from L-glutamate: step 2/2. Catalyzes the NADPH-dependent reduction of L-glutamate 5-phosphate into L-glutamate 5-semialdehyde and phosphate. The product spontaneously undergoes cyclization to form 1-pyrroline-5-carboxylate. The polypeptide is Gamma-glutamyl phosphate reductase (Acaryochloris marina (strain MBIC 11017)).